Here is a 200-residue protein sequence, read N- to C-terminus: UPF0301 protein BOV_0485 (200 aa).

The protein belongs to the UPF0301 (AlgH) family.

This is UPF0301 protein BOV_0485 from Brucella ovis (strain ATCC 25840 / 63/290 / NCTC 10512).